A 410-amino-acid polypeptide reads, in one-letter code: Zinc transporter ttm-1 (410 aa).

Low complexity-rich tracts occupy residues 1–13 (MTIS…SIRL) and 35–46 (SVSSSDSGVSAD). Positions 1-94 (MTISMISPSS…GAHKHSHDEK (94 aa)) are disordered. At 1 to 103 (MTISMISPSS…KYQKGRRAEK (103 aa)) the chain is on the cytoplasmic side. A compositionally biased stretch (basic residues) spans 50–69 (HHHHGHGHGHSHGGHGHSHT). A helical transmembrane segment spans residues 104–124 (VLWAVAALSAVFIAAEFVGGF). Topologically, residues 125-129 (WAQSL) are extracellular. The helical transmembrane segment at 130 to 150 (AIMTDAGHMLSDLLSFIISIF) threads the bilayer. The Cytoplasmic segment spans residues 151–171 (AIRCARLPASKRLSFGYERAE). A helical transmembrane segment spans residues 172-192 (VLGALTSVIILWVLTTVLVVV). At 193–208 (AIQRIVNNEHEVDADV) the chain is on the extracellular side. Residues 209–229 (MLITAGVGVLFNIVMGLVLHF) traverse the membrane as a helical segment. Topologically, residues 230–258 (GTGGHGHTHGGHSSHGHAHDGKNVNVRAA) are cytoplasmic. A helical membrane pass occupies residues 259–279 (LIHVIGDLVQSIGVLIAALII). Position 280 (Arg280) is a topological domain, extracellular. A helical membrane pass occupies residues 281 to 301 (FTGWTLADPICTFLFSIIVLF). Over 302–410 (TTVTVMRDIF…CDTCQQQETA (109 aa)) the chain is Cytoplasmic.

The protein belongs to the cation diffusion facilitator (CDF) transporter (TC 2.A.4) family. SLC30A subfamily. In terms of tissue distribution, isoform a: Expressed in the hypodermis and the intestine. Isoform b: Expressed in the intestine, head neurons, seam cells, hypodermis, and the vulva.

It localises to the cytoplasmic vesicle membrane. Its subcellular location is the apical cell membrane. Functionally, promotes excretion of zinc from intestinal cells into the intestinal lumen in response to increased dietary zinc. Involved in cadmium resistance, possibly by promoting its transport from cells. Involved in resistance to B.thuringiensis pore-forming toxin Cry5B downstream of the sek-1 and pmk-1 MAPK kinase pathway. The polypeptide is Zinc transporter ttm-1 (Caenorhabditis elegans).